Consider the following 217-residue polypeptide: MTLKKHRGKMSEKSNVNKKFTNSTQNNSNWSNSPSMINPESFINNPNLIVFKNWVDKLQQEFPTCDVVDSKNNSITIKIRYDDVFRSIYKEVKKSVPDSKVSLKPCNDDKKYGMCMVVKSKTIIVGWEEWGFGKPIEISGEGEFTYYIPLENVINAFDSAWRMNNKGKPLHFKFMTRRLTPRDATTKGVSAEALSSPPTVGEIWHYITIEFVTVTTT.

A disordered region spans residues 1–32 (MTLKKHRGKMSEKSNVNKKFTNSTQNNSNWSN). The span at 22–32 (NSTQNNSNWSN) shows a compositional bias: low complexity.

This is an uncharacterized protein from Acidianus filamentous virus 2 (isolate Italy/Pozzuoli) (AFV-2).